The sequence spans 713 residues: B3 domain-containing transcription factor VAL3 (713 aa).

The segment at residues 328–427 is a DNA-binding region (TF-B3); the sequence is FEKILSATDT…KLILGFRKAS (100 aa). 2 disordered regions span residues 459–478 and 616–713; these read VECSSGKKKSSMMITRSKRQ and LNSD…TSSM. Positions 464–477 are enriched in basic residues; that stretch reads GKKKSSMMITRSKR. Positions 616–629 are enriched in polar residues; it reads LNSDNGLHQSANNS. A compositionally biased stretch (basic and acidic residues) spans 663–674; it reads TKSETLPHDDTV. Over residues 676–688 the composition is skewed to low complexity; the sequence is SSFTSPSSSSAHS. The segment covering 690-700 has biased composition (basic and acidic residues); the sequence is NNKEDEGKLKT. Low complexity predominate over residues 701–713; sequence TTEIADTTTTSSM.

The protein resides in the nucleus. Its function is as follows. May be involved in plant development. The chain is B3 domain-containing transcription factor VAL3 (VAL3) from Arabidopsis thaliana (Mouse-ear cress).